Consider the following 270-residue polypeptide: 3-phenylpropionate-dihydrodiol/cinnamic acid-dihydrodiol dehydrogenase (270 aa).

NAD(+) is bound at residue Phe10–Ala34. Ser143 contacts substrate. Tyr156 acts as the Proton acceptor in catalysis.

It belongs to the short-chain dehydrogenases/reductases (SDR) family.

It carries out the reaction 3-(cis-5,6-dihydroxycyclohexa-1,3-dien-1-yl)propanoate + NAD(+) = 3-(2,3-dihydroxyphenyl)propanoate + NADH + H(+). It catalyses the reaction (2E)-3-(cis-5,6-dihydroxycyclohexa-1,3-dien-1-yl)prop-2-enoate + NAD(+) = (2E)-3-(2,3-dihydroxyphenyl)prop-2-enoate + NADH + H(+). It functions in the pathway aromatic compound metabolism; 3-phenylpropanoate degradation. Its function is as follows. Converts 3-phenylpropionate-dihydrodiol (PP-dihydrodiol) and cinnamic acid-dihydrodiol (CI-dihydrodiol) into 3-(2,3-dihydroxylphenyl)propanoic acid (DHPP) and 2,3-dihydroxicinnamic acid (DHCI), respectively. The protein is 3-phenylpropionate-dihydrodiol/cinnamic acid-dihydrodiol dehydrogenase of Escherichia coli (strain K12 / MC4100 / BW2952).